The chain runs to 637 residues: Clathrin coat assembly protein AP180A (637 aa).

The region spanning 1–126 (MTTYFKLVKG…REFGKIKKDY (126 aa)) is the ENTH domain. The tract at residues 555–637 (TQNHLQQQQQ…YANNLNLIDM (83 aa)) is disordered. Composition is skewed to low complexity over residues 560–579 (QQQQ…QPQQ) and 600–622 (QPQN…TQQP). Positions 587 to 637 (AGANPVTNITGTVQPQNFPFYPQQQPQPEQSQTQQPVLGNQYANNLNLIDM) are clathrin-binding. Over residues 623–637 (VLGNQYANNLNLIDM) the composition is skewed to polar residues.

Belongs to the AP180 family. In terms of assembly, interacts with PAN1 and the clathrin heavy and light chains CHC1 and CLC1.

The protein localises to the bud. It is found in the bud neck. Its subcellular location is the cell membrane. The protein resides in the cytoplasm. Involved in endocytosis and clathrin cage assembly. The chain is Clathrin coat assembly protein AP180A (YAP1801) from Saccharomyces cerevisiae (strain ATCC 204508 / S288c) (Baker's yeast).